The primary structure comprises 315 residues: DNA-directed RNA polymerase subunit alpha (315 aa).

The tract at residues 1 to 228 (MLEIEKPKIE…EHFKLFMTLT (228 aa)) is alpha N-terminal domain (alpha-NTD). Residues 245–315 (KEKVLEMTIE…LGLGLRKSED (71 aa)) are alpha C-terminal domain (alpha-CTD).

This sequence belongs to the RNA polymerase alpha chain family. As to quaternary structure, homodimer. The RNAP catalytic core consists of 2 alpha, 1 beta, 1 beta' and 1 omega subunit. When a sigma factor is associated with the core the holoenzyme is formed, which can initiate transcription.

It carries out the reaction RNA(n) + a ribonucleoside 5'-triphosphate = RNA(n+1) + diphosphate. DNA-dependent RNA polymerase catalyzes the transcription of DNA into RNA using the four ribonucleoside triphosphates as substrates. The sequence is that of DNA-directed RNA polymerase subunit alpha from Clostridium botulinum (strain Langeland / NCTC 10281 / Type F).